A 535-amino-acid polypeptide reads, in one-letter code: Bifunctional purine biosynthesis protein PurH (535 aa).

Residues 1–148 (MNNARPIRRA…KNHKDTTIIV (148 aa)) form the MGS-like domain.

This sequence belongs to the PurH family.

It catalyses the reaction (6R)-10-formyltetrahydrofolate + 5-amino-1-(5-phospho-beta-D-ribosyl)imidazole-4-carboxamide = 5-formamido-1-(5-phospho-D-ribosyl)imidazole-4-carboxamide + (6S)-5,6,7,8-tetrahydrofolate. The catalysed reaction is IMP + H2O = 5-formamido-1-(5-phospho-D-ribosyl)imidazole-4-carboxamide. It functions in the pathway purine metabolism; IMP biosynthesis via de novo pathway; 5-formamido-1-(5-phospho-D-ribosyl)imidazole-4-carboxamide from 5-amino-1-(5-phospho-D-ribosyl)imidazole-4-carboxamide (10-formyl THF route): step 1/1. The protein operates within purine metabolism; IMP biosynthesis via de novo pathway; IMP from 5-formamido-1-(5-phospho-D-ribosyl)imidazole-4-carboxamide: step 1/1. This is Bifunctional purine biosynthesis protein PurH from Shewanella woodyi (strain ATCC 51908 / MS32).